The primary structure comprises 187 residues: Casparian strip membrane protein 5 (187 aa).

Residues 1-24 are Cytoplasmic-facing; sequence MKSGQAEIMETSKGIQKSGLMSRR. The helical transmembrane segment at 25–45 threads the bilayer; that stretch reads IAILEFILRIVAFFNTIGSAI. The Extracellular segment spans residues 46–74; the sequence is LMGTTHETLPFFTQFIRFQAEYNDLPALT. The helical transmembrane segment at 75–95 threads the bilayer; it reads FFVVANAVVSGYLILSLTLAF. Over 96–107 the chain is Cytoplasmic; sequence VHIVKRKTQNTR. Residues 108-128 traverse the membrane as a helical segment; that stretch reads ILLIILDVAMLGLLTSGASSA. The Extracellular segment spans residues 129–161; the sequence is AAIVYLAHNGNNKTNWFAICQQFNSFCERISGS. Asn-140 carries N-linked (GlcNAc...) asparagine glycosylation. Residues 162–182 traverse the membrane as a helical segment; that stretch reads LIGSFIAIVLLILLILLSAIA. The Cytoplasmic portion of the chain corresponds to 183–187; it reads LSRRH.

Belongs to the Casparian strip membrane proteins (CASP) family. Homodimer and heterodimers with other CASP proteins. Interacts with CASP1, CASP3 and CASP4.

The protein localises to the cell membrane. In terms of biological role, regulates membrane-cell wall junctions and localized cell wall deposition. Required for establishment of the Casparian strip membrane domain (CSD) and the subsequent formation of Casparian strips, a cell wall modification of the root endodermis that determines an apoplastic barrier between the intraorganismal apoplasm and the extraorganismal apoplasm and prevents lateral diffusion. The polypeptide is Casparian strip membrane protein 5 (CASP5) (Arabidopsis thaliana (Mouse-ear cress)).